A 377-amino-acid chain; its full sequence is Dehydrogenase/reductase SDR family member 13 (377 aa).

Residues 1-25 form the signal peptide; the sequence is MEALLLGAGLLLGAYVLVYYNLVKA. NAD(+) is bound by residues serine 46 and isoleucine 48. Serine 170 is a binding site for substrate. 3 residues coordinate NAD(+): tyrosine 197, lysine 201, and serine 232. Catalysis depends on tyrosine 197, which acts as the Proton acceptor. Residues 309 to 377 form a disordered region; the sequence is RLAGLGPGED…AKVEPEIQLS (69 aa). The segment covering 317 to 331 has biased composition (acidic residues); it reads EDAEPDEDPQSEDSE. Low complexity predominate over residues 347–357; the sequence is SQPYPSPQSSP. Residues 368–377 show a composition bias toward basic and acidic residues; it reads AKVEPEIQLS.

This sequence belongs to the short-chain dehydrogenases/reductases (SDR) family.

The protein resides in the secreted. Functionally, putative oxidoreductase. The chain is Dehydrogenase/reductase SDR family member 13 from Homo sapiens (Human).